Here is a 275-residue protein sequence, read N- to C-terminus: 2,3,4,5-tetrahydropyridine-2,6-dicarboxylate N-succinyltransferase (275 aa).

It belongs to the transferase hexapeptide repeat family.

The protein resides in the cytoplasm. The catalysed reaction is (S)-2,3,4,5-tetrahydrodipicolinate + succinyl-CoA + H2O = (S)-2-succinylamino-6-oxoheptanedioate + CoA. It participates in amino-acid biosynthesis; L-lysine biosynthesis via DAP pathway; LL-2,6-diaminopimelate from (S)-tetrahydrodipicolinate (succinylase route): step 1/3. This Burkholderia ambifaria (strain MC40-6) protein is 2,3,4,5-tetrahydropyridine-2,6-dicarboxylate N-succinyltransferase.